The following is a 622-amino-acid chain: Sodium/potassium/calcium exchanger 4 (622 aa).

Residues 1–38 (MALRGTLRPLKVRRRREMLPQQVGFVCAVLALVCCASG) form the signal peptide. The Extracellular segment spans residues 39–97 (LFGSLGHKTASASKRVLPDTWRNRKLMAPVNGTQTAKNCTDPAIHEFPTDLFSNKERQH). Asn-69 and Asn-76 each carry an N-linked (GlcNAc...) asparagine glycan. The chain crosses the membrane as a helical span at residues 98 to 118 (GAVLLHILGALYMFYALAIVC). Residues 119–142 (DDFFVPSLEKICERLHLSEDVAGA) are Cytoplasmic-facing. An Alpha-1 repeat occupies 139–179 (VAGATFMAAGSSTPELFASVIGVFITHGDVGVGTIVGSAVF). A helical transmembrane segment spans residues 143 to 163 (TFMAAGSSTPELFASVIGVFI). Topologically, residues 164–172 (THGDVGVGT) are extracellular. The chain crosses the membrane as a helical span at residues 173–193 (IVGSAVFNILCIIGVCGLFAG). Topologically, residues 194-200 (QVVRLTW) are cytoplasmic. The helical transmembrane segment at 201-221 (WAVCRDSVYYTISVIVLIVFI) threads the bilayer. At 222–224 (YDE) the chain is on the extracellular side. The helical transmembrane segment at 225–245 (QIVWWEGLVLIILYVFYILIM) threads the bilayer. Residues 246–457 (KYNVKMQAFF…RWEKFFMVTF (212 aa)) are Cytoplasmic-facing. Residues 358 to 410 (ANGVSSKPLQNGRHENIENGNVPVENPEDPQQNQEQQPPPQPPPPEPEPVEAD) are disordered. Low complexity predominate over residues 380–393 (PVENPEDPQQNQEQ). The segment covering 394-404 (QPPPQPPPPEP) has biased composition (pro residues). The helical transmembrane segment at 458–478 (ITATLWIAVFSYIMVWLVTII) threads the bilayer. A topological domain (extracellular) is located at residue Gly-479. Residues 480-500 (YTLGIPDVIMGITFLAAGTSV) traverse the membrane as a helical segment. The Alpha-2 repeat unit spans residues 495–526 (AAGTSVPDCMASLIVARQGLGDMAVSNTIGSN). Residues 501–526 (PDCMASLIVARQGLGDMAVSNTIGSN) are Cytoplasmic-facing. Residues 527-547 (VFDILVGLGVPWGLQTMVVNY) form a helical membrane-spanning segment. Residues 548-557 (GSTVKINSRG) are Extracellular-facing. The chain crosses the membrane as a helical span at residues 558–578 (LVYSVVLLLGSVALTVLGIHL). The Cytoplasmic portion of the chain corresponds to 579–586 (NKWRLDRK). A helical transmembrane segment spans residues 587–607 (LGVYVLVLYAIFLCFSIMIEF). The Extracellular portion of the chain corresponds to 608–622 (NVFTFVNLPMCREDD).

The protein belongs to the Ca(2+):cation antiporter (CaCA) (TC 2.A.19) family. SLC24A subfamily. In terms of tissue distribution, expressed abundantly in all regions of the brain, aorta, lung and thymus. Expressed at lower levels in the stomach and intestine.

Its subcellular location is the cell membrane. The protein resides in the cytoplasm. It catalyses the reaction Ca(2+)(out) + K(+)(out) + 4 Na(+)(in) = Ca(2+)(in) + K(+)(in) + 4 Na(+)(out). In terms of biological role, calcium, potassium:sodium antiporter that transports 1 Ca(2+) and 1 K(+) in exchange for 4 Na(+). Controls the rapid response termination and proper regulation of adaptation in olfactory sensory neurons (OSNs) which subsequently influences how odor information is encoded and perceived. May play a role in calcium transport during amelogenesis. The sequence is that of Sodium/potassium/calcium exchanger 4 from Homo sapiens (Human).